Consider the following 276-residue polypeptide: Dermonecrotic toxin LsaSicTox-alphaIB2i (276 aa).

The active site involves His5. Mg(2+) contacts are provided by Glu25 and Asp27. His41 serves as the catalytic Nucleophile. Disulfide bonds link Cys45-Cys51 and Cys47-Cys190. Asp85 contacts Mg(2+). Residues Asn129 and Asn253 are each glycosylated (N-linked (GlcNAc...) asparagine).

This sequence belongs to the arthropod phospholipase D family. Class II subfamily. Mg(2+) serves as cofactor. As to expression, expressed by the venom gland.

Its subcellular location is the secreted. The catalysed reaction is an N-(acyl)-sphingosylphosphocholine = an N-(acyl)-sphingosyl-1,3-cyclic phosphate + choline. The enzyme catalyses an N-(acyl)-sphingosylphosphoethanolamine = an N-(acyl)-sphingosyl-1,3-cyclic phosphate + ethanolamine. It carries out the reaction a 1-acyl-sn-glycero-3-phosphocholine = a 1-acyl-sn-glycero-2,3-cyclic phosphate + choline. It catalyses the reaction a 1-acyl-sn-glycero-3-phosphoethanolamine = a 1-acyl-sn-glycero-2,3-cyclic phosphate + ethanolamine. Its function is as follows. Dermonecrotic toxins cleave the phosphodiester linkage between the phosphate and headgroup of certain phospholipids (sphingolipid and lysolipid substrates), forming an alcohol (often choline) and a cyclic phosphate. This toxin acts on sphingomyelin (SM). It may also act on ceramide phosphoethanolamine (CPE), lysophosphatidylcholine (LPC) and lysophosphatidylethanolamine (LPE), but not on lysophosphatidylserine (LPS), and lysophosphatidylglycerol (LPG). It acts by transphosphatidylation, releasing exclusively cyclic phosphate products as second products. Induces dermonecrosis, hemolysis, increased vascular permeability, edema, inflammatory response, and platelet aggregation. The protein is Dermonecrotic toxin LsaSicTox-alphaIB2i of Loxosceles sabina (Tucson recluse spider).